We begin with the raw amino-acid sequence, 121 residues long: Flagellar protein FliT (121 aa).

A required for homodimerization region spans residues 1–50 (MNHAPHLYFAWQQLVEKSQLMLRLATEEQWDELIASEMAYVNAVQEIAHL). The interval 60-98 (MQEQLRPMLRLILDNESKVKQLLQIRMDELAKLVGQSSV) is fliD binding.

This sequence belongs to the FliT family. In terms of assembly, homodimer. Interacts with FliD and FlhC.

It localises to the cytoplasm. Its subcellular location is the cytosol. Its function is as follows. Dual-function protein that regulates the transcription of class 2 flagellar operons and that also acts as an export chaperone for the filament-capping protein FliD. As a transcriptional regulator, acts as an anti-FlhDC factor; it directly binds FlhC, thus inhibiting the binding of the FlhC/FlhD complex to class 2 promoters, resulting in decreased expression of class 2 flagellar operons. As a chaperone, effects FliD transition to the membrane by preventing its premature polymerization, and by directing it to the export apparatus. The chain is Flagellar protein FliT from Escherichia coli O157:H7.